The sequence spans 2542 residues: Zinc finger FYVE domain-containing protein 26 (2542 aa).

2 disordered regions span residues 591 to 658 (HLPE…GPHT) and 740 to 811 (VTSN…QVEA). Residues serine 612 and serine 616 each carry the phosphoserine modification. Positions 752–772 (RRYRPTAKRHSSLRRGRRTRR) are enriched in basic residues. The segment covering 785 to 803 (SLEGTSSELSTSTSEGSLS) has biased composition (low complexity). Serine 798 is subject to Phosphoserine. Residues 866-891 (MFVERYQEVIQELARVEHKIENQNSD) are a coiled coil. Residues 1273–1292 (SPRPSENPSAERKSDSSPKD) are disordered. Over residues 1281–1290 (SAERKSDSSP) the composition is skewed to basic and acidic residues. Positions 1495–1522 (VSDMAVPEELKSELQRKLTELRVYQKIL) form a coiled coil. 4 positions are modified to phosphoserine: serine 1739, serine 1761, serine 1783, and serine 1785. Positions 1746 to 1807 (PVHQASDPET…LEFVPPETPP (62 aa)) are disordered. Residues 1757-1779 (SRSSSAEFSAAAAAPAPAAPGSA) are compositionally biased toward low complexity. The FYVE-type zinc-finger motif lies at 1815–1875 (DETESMCMVC…VCDQCYSYYN (61 aa)). Positions 1821, 1824, 1838, 1841, 1846, 1849, 1867, and 1870 each coordinate Zn(2+).

This sequence belongs to the ZFYVE26 family. As to quaternary structure, interacts with AP5Z1, AP5B1, AP5S1 and SPG11. Interacts with TTC19 and KIF13A.

It localises to the cytoplasm. It is found in the cytoskeleton. The protein localises to the microtubule organizing center. Its subcellular location is the centrosome. The protein resides in the midbody. Phosphatidylinositol 3-phosphate-binding protein required for the abscission step in cytokinesis: recruited to the midbody during cytokinesis and acts as a regulator of abscission. May also be required for efficient homologous recombination DNA double-strand break repair. This is Zinc finger FYVE domain-containing protein 26 (Zfyve26) from Rattus norvegicus (Rat).